Consider the following 455-residue polypeptide: MSLDIVILAAGQGTRMRSALPKVLHPVAGNSMLGHVIHSARQLSPSGIHVVIGHGADAVREQLSADDLNFVMQDKQLGTGHAVAQALPALTADTVLILYGDVPLIEVETLSRLLERVNPQQLGLLTVALDDPTGYGRIVRDDQNRVCAIVEHKDASDAQKAITEGNTGILAVPAAHLADWLGRLSNNNAQGEYYLTDVIAMAANDGLVVATEQPHDAMEVQGANDRKQLSELERHYQMREARRLMAAGVTLRDPARFDVRGEVIVGRDVLIDINVILEGKVVIEDDVVIGPNCVIKDSTLRKGVVVKANSHIEGAILGEGSDAGPFARLRPGSVLGAKAHVGNFVELKNANLGEGAKVGHLTYLGDAEIGARTNIGAGTITCNYDGANKHKTTLGADVFIGSNNSLVAPVDILDGATTAAGSTITQNVPAEQLGVARARQRNIEGWKRPVKISKD.

The interval 1-226 (MSLDIVILAA…AMEVQGANDR (226 aa)) is pyrophosphorylase. UDP-N-acetyl-alpha-D-glucosamine is bound by residues 8 to 11 (LAAG), lysine 22, glutamine 73, 78 to 79 (GT), 99 to 101 (YGD), glycine 136, glutamate 151, asparagine 166, and asparagine 224. Aspartate 101 provides a ligand contact to Mg(2+). Asparagine 224 is a binding site for Mg(2+). The tract at residues 227–247 (KQLSELERHYQMREARRLMAA) is linker. An N-acetyltransferase region spans residues 248–455 (GVTLRDPARF…WKRPVKISKD (208 aa)). Residues arginine 330 and lysine 348 each coordinate UDP-N-acetyl-alpha-D-glucosamine. Histidine 360 acts as the Proton acceptor in catalysis. UDP-N-acetyl-alpha-D-glucosamine-binding residues include tyrosine 363 and asparagine 374. Acetyl-CoA-binding positions include alanine 377, 383 to 384 (NY), serine 402, alanine 420, and arginine 437.

It in the N-terminal section; belongs to the N-acetylglucosamine-1-phosphate uridyltransferase family. In the C-terminal section; belongs to the transferase hexapeptide repeat family. In terms of assembly, homotrimer. Mg(2+) serves as cofactor.

Its subcellular location is the cytoplasm. It catalyses the reaction alpha-D-glucosamine 1-phosphate + acetyl-CoA = N-acetyl-alpha-D-glucosamine 1-phosphate + CoA + H(+). It carries out the reaction N-acetyl-alpha-D-glucosamine 1-phosphate + UTP + H(+) = UDP-N-acetyl-alpha-D-glucosamine + diphosphate. Its pathway is nucleotide-sugar biosynthesis; UDP-N-acetyl-alpha-D-glucosamine biosynthesis; N-acetyl-alpha-D-glucosamine 1-phosphate from alpha-D-glucosamine 6-phosphate (route II): step 2/2. The protein operates within nucleotide-sugar biosynthesis; UDP-N-acetyl-alpha-D-glucosamine biosynthesis; UDP-N-acetyl-alpha-D-glucosamine from N-acetyl-alpha-D-glucosamine 1-phosphate: step 1/1. It functions in the pathway bacterial outer membrane biogenesis; LPS lipid A biosynthesis. In terms of biological role, catalyzes the last two sequential reactions in the de novo biosynthetic pathway for UDP-N-acetylglucosamine (UDP-GlcNAc). The C-terminal domain catalyzes the transfer of acetyl group from acetyl coenzyme A to glucosamine-1-phosphate (GlcN-1-P) to produce N-acetylglucosamine-1-phosphate (GlcNAc-1-P), which is converted into UDP-GlcNAc by the transfer of uridine 5-monophosphate (from uridine 5-triphosphate), a reaction catalyzed by the N-terminal domain. The sequence is that of Bifunctional protein GlmU from Pseudomonas syringae pv. syringae (strain B728a).